A 419-amino-acid polypeptide reads, in one-letter code: Monooxygenase CTB7 (419 aa).

The protein belongs to the aromatic-ring hydroxylase family. KMO subfamily.

The protein operates within mycotoxin biosynthesis. Monooxygenase; part of the gene cluster that mediates the biosynthesis of cercosporin, a light-activated, non-host-selective toxin. The perylenequinone chromophore of cercosporin absorbs light energy to attain an electronically-activated triplet state and produces active oxygen species such as the hydroxyl radical, superoxide, hydrogen peroxide or singlet oxygen upon reaction with oxygen molecules. These reactive oxygen species cause damage to various cellular components including lipids, proteins and nucleic acids. The first step of cercosporin biosynthesis is performed by the polyketide synthase CTB1 which catalyzes the formation of nor-toralactone. The starter unit acyltransferase (SAT) domain of CTB1 initiates polyketide extension by the selective utilization of acetyl-CoA, which is elongated to the heptaketide in the beta-ketoacyl synthase (KS) domain by successive condensations with six malonyl units introduced by the malonyl acyltransferase (MAT) domain. The product template (PT) domain catalyzes C4-C9 and C2-C11 aldol cyclizations and dehydrations to a trihydroxynaphthalene, which is thought to be delivered to the thioesterase (TE) domain for product release. The bifunctional enzyme CTB3 then methylates nor-toralactone to toralactone before conducting an unusual oxidative aromatic ring opening. The O-methyltransferase CTB2 further methylates the nascent OH-6 of the CBT3 product, blocking further oxidation at this site before the reductase CTB6 reduces the 2-oxopropyl ketone at position C7, giving naphthalene. The FAD-dependent monooxygenase CTB5 in concert with the multicopper oxidase CTB12 are responsible for homodimerization of naphthalene with CTB7 installing the dioxepine moiety, finally producing cercosporin. The fasciclin domain-containing protein CTB11 might act with CTB5 and CTB12 whereas the roles of CTB9 and CTB10 have still to be elucidated. In Cercospora beticola (Sugarbeet leaf spot fungus), this protein is Monooxygenase CTB7.